The chain runs to 70 residues: DNA gyrase inhibitor YacG (70 aa).

The Zn(2+) site is built by cysteine 9, cysteine 12, cysteine 28, and cysteine 32. Residues 43–70 (ESRKIPGSSIDPESIVTTNNKQDNVDEQ) are disordered.

This sequence belongs to the DNA gyrase inhibitor YacG family. As to quaternary structure, interacts with GyrB. It depends on Zn(2+) as a cofactor.

Inhibits all the catalytic activities of DNA gyrase by preventing its interaction with DNA. Acts by binding directly to the C-terminal domain of GyrB, which probably disrupts DNA binding by the gyrase. In Legionella pneumophila (strain Corby), this protein is DNA gyrase inhibitor YacG.